The chain runs to 392 residues: Phosphopentomutase (392 aa).

Positions 10, 282, 287, 323, 324, and 335 each coordinate Mn(2+).

This sequence belongs to the phosphopentomutase family. It depends on Mn(2+) as a cofactor.

Its subcellular location is the cytoplasm. The enzyme catalyses 2-deoxy-alpha-D-ribose 1-phosphate = 2-deoxy-D-ribose 5-phosphate. The catalysed reaction is alpha-D-ribose 1-phosphate = D-ribose 5-phosphate. It participates in carbohydrate degradation; 2-deoxy-D-ribose 1-phosphate degradation; D-glyceraldehyde 3-phosphate and acetaldehyde from 2-deoxy-alpha-D-ribose 1-phosphate: step 1/2. Functionally, isomerase that catalyzes the conversion of deoxy-ribose 1-phosphate (dRib-1-P) and ribose 1-phosphate (Rib-1-P) to deoxy-ribose 5-phosphate (dRib-5-P) and ribose 5-phosphate (Rib-5-P), respectively. This is Phosphopentomutase from Dictyoglomus thermophilum (strain ATCC 35947 / DSM 3960 / H-6-12).